Here is a 391-residue protein sequence, read N- to C-terminus: S-adenosylmethionine synthase (391 aa).

His-19 is an ATP binding site. Position 21 (Asp-21) interacts with Mg(2+). Glu-47 provides a ligand contact to K(+). L-methionine contacts are provided by Glu-60 and Gln-103. A flexible loop region spans residues 103 to 113 (QSADIAQGVDR). ATP contacts are provided by residues 168–170 (DGK), 236–237 (RF), Asp-245, 251–252 (RK), Ala-268, and Lys-272. Asp-245 is a binding site for L-methionine. Lys-276 is an L-methionine binding site.

The protein belongs to the AdoMet synthase family. In terms of assembly, homotetramer; dimer of dimers. The cofactor is Mg(2+). K(+) serves as cofactor.

Its subcellular location is the cytoplasm. The enzyme catalyses L-methionine + ATP + H2O = S-adenosyl-L-methionine + phosphate + diphosphate. It functions in the pathway amino-acid biosynthesis; S-adenosyl-L-methionine biosynthesis; S-adenosyl-L-methionine from L-methionine: step 1/1. Its function is as follows. Catalyzes the formation of S-adenosylmethionine (AdoMet) from methionine and ATP. The overall synthetic reaction is composed of two sequential steps, AdoMet formation and the subsequent tripolyphosphate hydrolysis which occurs prior to release of AdoMet from the enzyme. The polypeptide is S-adenosylmethionine synthase (Nitratidesulfovibrio vulgaris (strain ATCC 29579 / DSM 644 / CCUG 34227 / NCIMB 8303 / VKM B-1760 / Hildenborough) (Desulfovibrio vulgaris)).